Here is a 498-residue protein sequence, read N- to C-terminus: Glycerol kinase (498 aa).

Threonine 12 is a binding site for ADP. Residues threonine 12, threonine 13, and serine 14 each contribute to the ATP site. Threonine 12 is a binding site for sn-glycerol 3-phosphate. Residue arginine 16 coordinates ADP. Arginine 82, glutamate 83, and tyrosine 134 together coordinate sn-glycerol 3-phosphate. Glycerol contacts are provided by arginine 82, glutamate 83, and tyrosine 134. Position 230 is a phosphohistidine; by HPr (histidine 230). Aspartate 244 serves as a coordination point for sn-glycerol 3-phosphate. Residues aspartate 244 and glutamine 245 each contribute to the glycerol site. Residues threonine 266, glycine 309, glutamine 313, glycine 410, and asparagine 414 each contribute to the ADP site. Threonine 266, glycine 309, glutamine 313, and glycine 410 together coordinate ATP.

The protein belongs to the FGGY kinase family. Homotetramer and homodimer (in equilibrium). In terms of processing, the phosphoenolpyruvate-dependent sugar phosphotransferase system (PTS), including enzyme I, and histidine-containing protein (HPr) are required for the phosphorylation, which leads to the activation of the enzyme.

It carries out the reaction glycerol + ATP = sn-glycerol 3-phosphate + ADP + H(+). Its pathway is polyol metabolism; glycerol degradation via glycerol kinase pathway; sn-glycerol 3-phosphate from glycerol: step 1/1. With respect to regulation, activated by phosphorylation and inhibited by fructose 1,6-bisphosphate (FBP). In terms of biological role, key enzyme in the regulation of glycerol uptake and metabolism. Catalyzes the phosphorylation of glycerol to yield sn-glycerol 3-phosphate. The chain is Glycerol kinase from Staphylococcus aureus (strain COL).